A 199-amino-acid polypeptide reads, in one-letter code: 5'-deoxynucleotidase KPK_1466 (199 aa).

Substrate contacts are provided by residues 18–19 and His-33; that span reads RW. Positions 30–142 constitute an HD domain; sequence VSEHSLQVAM…VKQADALCAY (113 aa). A divalent metal cation-binding residues include His-33, His-68, and Asp-69. Substrate contacts are provided by residues Asp-69, 77–80, and Asp-137; that span reads DLPT. Asp-137 contacts a divalent metal cation.

Belongs to the 5DNU family. In terms of assembly, homodimer. It depends on a divalent metal cation as a cofactor.

Its subcellular location is the cytoplasm. The catalysed reaction is a 2'-deoxyribonucleoside 5'-phosphate + H2O = a 2'-deoxyribonucleoside + phosphate. Catalyzes the strictly specific dephosphorylation of 2'-deoxyribonucleoside 5'-monophosphates. The protein is 5'-deoxynucleotidase KPK_1466 of Klebsiella pneumoniae (strain 342).